The primary structure comprises 1097 residues: Importin-5 (1097 aa).

A2 carries the N-acetylalanine modification. HEAT repeat units lie at residues 5–38 (AAEQ…NIPG), 43–77 (TFLL…FDEV), 95–122 (MIIQ…NLID), 130–157 (PEGL…IFWN), 167–201 (QHYL…AAFI), 210–246 (LFKH…IADT), 254–289 (HLEA…LSET), 298–350 (TNIV…ACGL), 352–386 (GKLV…SAIG), 390–430 (HQQM…ATDF), 432–472 (PGFQ…FTED), 475–523 (KSLL…ADTA), 525–568 (EKFV…GLAV), 570–615 (KEKF…CKIL), 617–692 (KEFQ…AKEL), 695–737 (GFVE…ARVR), 741–780 (YLTQ…IEVM), 787–853 (NEHF…FSSY), 856–895 (KVLP…IEHC), 903–935 (AEYF…MAQY), 943–983 (FCTE…MKFK), 990–1021 (EEVL…DLIE), 1032–1067 (NTNL…VVRQ), and 1070–1093 (TSGG…IQEL). The 72-residue stretch at 28 to 99 (QAEETYENIP…KSELLMIIQM (72 aa)) folds into the Importin N-terminal domain. Residues 325–375 (DELEDDDFDSNAVAGESALDRMACGLGGKLVLPMIKEHIMQMLQNPDWKYR) are ran-GTP binding. S827 carries the phosphoserine modification.

This sequence belongs to the importin beta family. Importin beta-3 subfamily. Interacts with RPS7 and RPL5. Interacts with RPL23A (via BIB domain). Interacts with H2A, H2B, H3 and H4 histones. Interacts with CPEB3; this mediates CPEB3 nuclear import following neuronal stimulation which enhances the interaction in a RAN-regulated manner. Interacts with AIFM2; this interaction likely mediates the translocation of AIFM2 into the nucleus upon oxidative stress. Interacts with STX3 (isoform 3). Interacts with SRP19. As to quaternary structure, (Microbial infection) Interacts with HIV-1 Rev.

The protein resides in the cytoplasm. It is found in the nucleus. Its subcellular location is the nucleolus. Functions in nuclear protein import as nuclear transport receptor. Serves as receptor for nuclear localization signals (NLS) in cargo substrates. Is thought to mediate docking of the importin/substrate complex to the nuclear pore complex (NPC) through binding to nucleoporin and the complex is subsequently translocated through the pore by an energy requiring, Ran-dependent mechanism. At the nucleoplasmic side of the NPC, Ran binds to the importin, the importin/substrate complex dissociates and importin is re-exported from the nucleus to the cytoplasm where GTP hydrolysis releases Ran. The directionality of nuclear import is thought to be conferred by an asymmetric distribution of the GTP- and GDP-bound forms of Ran between the cytoplasm and nucleus. Mediates the nuclear import of ribosomal proteins RPL23A, RPS7 and RPL5. In vitro, mediates nuclear import of H2A, H2B, H3 and H4 histones. Binds to CPEB3 and mediates its nuclear import following neuronal stimulation. In case of HIV-1 infection, binds and mediates the nuclear import of HIV-1 Rev. The polypeptide is Importin-5 (IPO5) (Homo sapiens (Human)).